The following is a 350-amino-acid chain: Inhibitor of nuclear factor kappa-B kinase-interacting protein (350 aa).

Over residues 1-11 (MSEVKSRKKSG) the composition is skewed to basic residues. The disordered stretch occupies residues 1 to 39 (MSEVKSRKKSGPKGAPAAEPGKRSEGGKTPVARSSGGGG). A helical transmembrane segment spans residues 46–62 (CLSLLSLGTCLGLAWFV). N-linked (GlcNAc...) asparagine glycosylation occurs at Asn144. The stretch at 184-217 (GLVTDVISLTDSVQELENKIEKVEKNTVKNIGDL) forms a coiled coil. A glycan (N-linked (GlcNAc...) asparagine) is linked at Asn328.

Post-translationally, N-glycosylated. Isoform 4 is glycosylated at Asn-154. Expressed in vein endothelial cells. Isoform 4 is expressed in lung, kidney, spleen, thymus and skeletal muscle.

The protein resides in the endoplasmic reticulum membrane. Functionally, target of p53/TP53 with pro-apoptotic function. This chain is Inhibitor of nuclear factor kappa-B kinase-interacting protein (IKBIP), found in Homo sapiens (Human).